The sequence spans 491 residues: Sucrose transport protein SUC7 (491 aa).

The segment covering 1-13 has biased composition (basic and acidic residues); it reads MSDLQANKDETTV. A disordered region spans residues 1–25; it reads MSDLQANKDETTVDRQSSSSVDLDG. The Cytoplasmic segment spans residues 1–32; sequence MSDLQANKDETTVDRQSSSSVDLDGPSPLRKM. Ser17 bears the Phosphoserine mark. Residues 33-53 form a helical membrane-spanning segment; it reads ISVASIAAGIQFGWALQLSLL. Residues 54–67 lie on the Extracellular side of the membrane; the sequence is TPYVQLLGVPHKWP. Residues 68 to 88 traverse the membrane as a helical segment; the sequence is SFIWLCGPVSGLLVQPSVGYF. Residues 89–100 lie on the Cytoplasmic side of the membrane; the sequence is SDRCTSRFGRRR. Residues 101–121 form a helical membrane-spanning segment; that stretch reads PFIATGALLVAVSVVLIGYAA. The Extracellular portion of the chain corresponds to 122–138; the sequence is DFGHSMGDKIDKPVKMR. The helical transmembrane segment at 139 to 159 threads the bilayer; the sequence is AVVIFALGFWILDVANNTLQG. Residues 160–180 lie on the Cytoplasmic side of the membrane; that stretch reads PCRAFLGDLAAGDAQKTRTAN. Residues 181 to 201 form a helical membrane-spanning segment; the sequence is AFFSFFMAVGNVLGYAAGSYT. The Extracellular portion of the chain corresponds to 202-223; that stretch reads NLYKIFPFTMTKACDIYCANLK. Residues 224-244 traverse the membrane as a helical segment; sequence SCFFLSITLLLVVTIIALWYV. Over 245–276 the chain is Cytoplasmic; the sequence is EDKQWSPKADSDNEKTPFFGEIFGAFKVMKRP. Residues 277-297 form a helical membrane-spanning segment; that stretch reads MWMLLIVTALNWIAWFPFLLY. The Extracellular portion of the chain corresponds to 298–323; sequence DTDWMGREVYGGDSKGDDKMKKLYNQ. Residues 324–344 form a helical membrane-spanning segment; that stretch reads GIHVGALGLMLNSIVLGVMSL. The Cytoplasmic segment spans residues 345-358; the sequence is GIEGISRKMGGAKR. Residues 359–379 form a helical membrane-spanning segment; sequence LWGAVNIILAVCLAMTVLVTK. Residues 380–402 are Extracellular-facing; it reads KAEEHRRIAGPMALPTDGIRAGA. A helical membrane pass occupies residues 403-423; it reads LTLFALLGIPLAITFSIPFAL. The Cytoplasmic segment spans residues 424 to 443; it reads ASIISSSSGAGQRLSLGVLN. Residues 444–464 form a helical membrane-spanning segment; that stretch reads MAIVIPQMIVSFGVGPIDALF. Residues 465–468 lie on the Extracellular side of the membrane; the sequence is GDGN. The chain crosses the membrane as a helical span at residues 469 to 489; that stretch reads LPGFVVGAIAAAVSSIVAFTV. Residues 490-491 lie on the Cytoplasmic side of the membrane; that stretch reads LP.

This sequence belongs to the glycoside-pentoside-hexuronide (GPH) cation symporter transporter (TC 2.A.2.4) family. As to expression, expressed in anthers.

The protein resides in the cell membrane. Its pathway is glycan biosynthesis; sucrose metabolism. Functionally, may be responsible for the transport of glucosides into the cell, with the concomitant uptake of protons (symport system). Does not seem to transport sucrose. The polypeptide is Sucrose transport protein SUC7 (Arabidopsis thaliana (Mouse-ear cress)).